The sequence spans 277 residues: Digeranylgeranylglyceryl phosphate synthase (277 aa).

Helical transmembrane passes span 16–36, 40–60, 93–113, 129–149, 153–173, 199–218, 222–244, and 253–273; these read ILAG…IPPV, ILIF…NDYF, FIGL…ALGA, FIGN…GAVG, IDLA…REIM, SGII…FLPV, IGLG…IDVL, and GQKI…LGAL.

Belongs to the UbiA prenyltransferase family. DGGGP synthase subfamily. Requires Mg(2+) as cofactor.

It localises to the cell membrane. The enzyme catalyses sn-3-O-(geranylgeranyl)glycerol 1-phosphate + (2E,6E,10E)-geranylgeranyl diphosphate = 2,3-bis-O-(geranylgeranyl)-sn-glycerol 1-phosphate + diphosphate. It participates in membrane lipid metabolism; glycerophospholipid metabolism. Functionally, prenyltransferase that catalyzes the transfer of the geranylgeranyl moiety of geranylgeranyl diphosphate (GGPP) to the C2 hydroxyl of (S)-3-O-geranylgeranylglyceryl phosphate (GGGP). This reaction is the second ether-bond-formation step in the biosynthesis of archaeal membrane lipids. This is Digeranylgeranylglyceryl phosphate synthase from Pyrococcus horikoshii (strain ATCC 700860 / DSM 12428 / JCM 9974 / NBRC 100139 / OT-3).